Here is a 162-residue protein sequence, read N- to C-terminus: MILQTKHFGEIEINQEEIIRFPDGIPGFDDYTQYIFIENPDKEVPFHWLQAVEDGALAFVITNPFLFKPDYDFEISKNVVEKLSIEDQSDLQVYTIVRVPENIKEMTANLRAPLVINTKNKKGKQLMLDSEVYHTKHYILEEIQKMQEQSNQTSPAAEGGRD.

Belongs to the FliW family. In terms of assembly, interacts with translational regulator CsrA and flagellin(s).

Its subcellular location is the cytoplasm. Functionally, acts as an anti-CsrA protein, binds CsrA and prevents it from repressing translation of its target genes, one of which is flagellin. Binds to flagellin and participates in the assembly of the flagellum. The sequence is that of Flagellar assembly factor FliW from Alkaliphilus metalliredigens (strain QYMF).